The chain runs to 38 residues: Large ribosomal subunit protein bL36 (38 aa).

It belongs to the bacterial ribosomal protein bL36 family.

This chain is Large ribosomal subunit protein bL36, found in Phytoplasma mali (strain AT).